The following is a 498-amino-acid chain: Glycerol kinase (498 aa).

Residue Thr12 coordinates ADP. ATP-binding residues include Thr12, Thr13, and Ser14. Position 12 (Thr12) interacts with sn-glycerol 3-phosphate. Residue Arg16 coordinates ADP. Residues Arg82, Glu83, Tyr134, and Asp244 each contribute to the sn-glycerol 3-phosphate site. Positions 82, 83, 134, 244, and 245 each coordinate glycerol. ADP contacts are provided by Thr266 and Gly309. The ATP site is built by Thr266, Gly309, Gln313, and Gly410. The ADP site is built by Gly410 and Asn414.

The protein belongs to the FGGY kinase family. As to quaternary structure, homotetramer and homodimer (in equilibrium).

It catalyses the reaction glycerol + ATP = sn-glycerol 3-phosphate + ADP + H(+). It participates in polyol metabolism; glycerol degradation via glycerol kinase pathway; sn-glycerol 3-phosphate from glycerol: step 1/1. Activated by phosphorylation and inhibited by fructose 1,6-bisphosphate (FBP). Its function is as follows. Key enzyme in the regulation of glycerol uptake and metabolism. Catalyzes the phosphorylation of glycerol to yield sn-glycerol 3-phosphate. The sequence is that of Glycerol kinase from Natranaerobius thermophilus (strain ATCC BAA-1301 / DSM 18059 / JW/NM-WN-LF).